The sequence spans 309 residues: MKIFHTVEEVVQWRTQELRETRFRETIGFVPTMGCLHSGHASLISQSVKENTYTVVSIFVNPSQFAPTEDLDNYPRTLPDDIKLLESLKVDVLFAPNAHVMYPQGIPLDIEEQKGPFVSVLGLSEKLEGKTRPNFFRGVATVVTKLFNIVMADVAYFGQKDIQQFIVLQCMVDELFVNTRLQMMPIVRNNNGLALSSRNKYLCPESLKISENLYRGLKAAENAIRRLAPGGRLSRSEIIDTVTQIWAPYVDSHDFKIDYVSLADFKTLDELSDVENTSEQQPIVISCAVYVTDREKPDTVVRLIDNIVI.

This sequence belongs to the pantothenate synthetase family.

Its subcellular location is the cytoplasm. It is found in the nucleus. The catalysed reaction is (R)-pantoate + beta-alanine + ATP = (R)-pantothenate + AMP + diphosphate + H(+). Its pathway is cofactor biosynthesis; (R)-pantothenate biosynthesis; (R)-pantothenate from (R)-pantoate and beta-alanine: step 1/1. Functionally, required for pantothenic acid biosynthesis. In Saccharomyces cerevisiae (strain ATCC 204508 / S288c) (Baker's yeast), this protein is Pantoate--beta-alanine ligase (PAN6).